The primary structure comprises 298 residues: Pyridoxal 5'-phosphate synthase subunit PdxS (298 aa).

Aspartate 24 is a D-ribose 5-phosphate binding site. Lysine 81 functions as the Schiff-base intermediate with D-ribose 5-phosphate in the catalytic mechanism. Position 153 (glycine 153) interacts with D-ribose 5-phosphate. Arginine 165 provides a ligand contact to D-glyceraldehyde 3-phosphate. D-ribose 5-phosphate is bound by residues glycine 214 and 235 to 236 (GS).

The protein belongs to the PdxS/SNZ family. As to quaternary structure, in the presence of PdxT, forms a dodecamer of heterodimers.

It carries out the reaction aldehydo-D-ribose 5-phosphate + D-glyceraldehyde 3-phosphate + L-glutamine = pyridoxal 5'-phosphate + L-glutamate + phosphate + 3 H2O + H(+). The protein operates within cofactor biosynthesis; pyridoxal 5'-phosphate biosynthesis. Catalyzes the formation of pyridoxal 5'-phosphate from ribose 5-phosphate (RBP), glyceraldehyde 3-phosphate (G3P) and ammonia. The ammonia is provided by the PdxT subunit. Can also use ribulose 5-phosphate and dihydroxyacetone phosphate as substrates, resulting from enzyme-catalyzed isomerization of RBP and G3P, respectively. The protein is Pyridoxal 5'-phosphate synthase subunit PdxS of Halalkalibacterium halodurans (strain ATCC BAA-125 / DSM 18197 / FERM 7344 / JCM 9153 / C-125) (Bacillus halodurans).